Consider the following 87-residue polypeptide: Stannin (87 aa).

The Mitochondrial intermembrane portion of the chain corresponds to 1–10; sequence MSIMDHSPTT. A helical membrane pass occupies residues 11-31; that stretch reads GVVTVIVILIAIAALGALILG. Residues 32–87 lie on the Cytoplasmic side of the membrane; it reads CWCYLRLQRISQSEDEESIVGDGETKEPFLLVQYSAKGPCVERKAKLTPNGPEVHS. Residue Ser49 is modified to Phosphoserine.

It belongs to the stannin family. In terms of assembly, monomer.

It is found in the mitochondrion outer membrane. Plays a role in the toxic effects of organotins. Plays a role in endosomal maturation. This is Stannin (SNN) from Bos taurus (Bovine).